The following is a 23-amino-acid chain: U1-ctenitoxin-Co1a (23 aa).

Cys10 and Cys20 are joined by a disulfide.

Expressed by the venom gland.

It is found in the secreted. In terms of biological role, insecticidal neurotoxin that reversibly inhibits the N-methyl-D-aspartate (NMDA)-subtype of ionotropic glutamate receptor (GRIN) and inhibits inactivation of insect sodium channels (Nav). In vivo, is highly toxic to insects. In Ctenus ornatus (Brazilian spider), this protein is U1-ctenitoxin-Co1a.